Reading from the N-terminus, the 519-residue chain is Zinc finger and BTB domain-containing protein 18.3 (519 aa).

In terms of domain architecture, BTB spans 24-91; it reads CDCTVLVGDA…MYEGKLQFKD (68 aa). The segment at 189–227 is disordered; sequence ASIPQTGGEVDTHTTAAGKTADSPCSSTGSLSHRSATSM. Residues 201 to 227 show a composition bias toward polar residues; that stretch reads HTTAAGKTADSPCSSTGSLSHRSATSM. 4 consecutive C2H2-type zinc fingers follow at residues 367–389, 407–429, 435–457, and 463–486; these read FMCPLCNKVFPSPHILQIHLSTH, PTCSLCGKTFSCMYTLKRHERTH, FTCTQCGKSFQYSHNLSRHAVVH, and HACKWCERRFTQSGDLYRHIRKFH.

This sequence belongs to the krueppel C2H2-type zinc-finger protein family. ZBTB18 subfamily.

It is found in the nucleus. Its function is as follows. Transcriptional repressor that plays a role in various developmental processes. Specifically binds the consensus DNA sequence 5'-[AC]ACATCTG[GT][AC]-3' which contains the E box core, and acts by recruiting chromatin remodeling multiprotein complexes. This Xenopus laevis (African clawed frog) protein is Zinc finger and BTB domain-containing protein 18.3 (zbtb18.3).